Reading from the N-terminus, the 321-residue chain is Polyprenyl transferase cle5 (321 aa).

The next 9 membrane-spanning stretches (helical) occupy residues 26 to 46, 57 to 77, 107 to 127, 132 to 149, 159 to 179, 189 to 209, 232 to 252, 262 to 282, and 300 to 320; these read PLLATFSGVWATILAGSHKIT, VLSQALLCFICSFVFCGAGMV, EALVWMAFQFISSWVLVSWML, VQAAMLPVTLSTILYPFA, IYPQYLLGFTLAYPSLIGTLA, LWASINQSLPMFVTVFTWTLY, VLAGSYIHHLLVVLAVLVLGA, SQWLWGGWMGVWTWSFLGQLV, and FALGVWTVFVCVVELLIGGNG.

This sequence belongs to the UbiA prenyltransferase family. Requires Mg(2+) as cofactor.

The protein resides in the membrane. The protein operates within secondary metabolite biosynthesis; terpenoid biosynthesis. In terms of biological role, polyprenyl transferase; part of the cluster A that mediates the biosynthesis of chevalone E and its oxidized derivatives that possess a unique five-membered lactone ring and can synergistically enhance the cytotoxicity of doxorubicin (DOX) in breast cancer cells. Within the pathway, cle5 takes part to the biosynthesis of the molecular scaffold by catalyzing the C-3 geranylgeranylation reaction of triacetic acid lactone (TAL) produced by cle1. The molecular scaffold is commonly biosynthesized by a series of enzymes including the non-reducing polyketide synthase (NR-PKS) cle1 that produces the alpha-pyrone triacetic acid lactone (TAL); The membrane-bound prenyltransferase cle5 that accepts TAL as its substrate to perform a C-3 geranylgeranylation reaction, in which the pathway-dedicated GGPS cle6 is required to provide GGPP, the other substrate of cle5; the FAD-dependent monooxygenase Cle3 that forms an (S)-epoxide ring at the terminal olefin of the geranylgeranyl group; and the terpene cyclase Cle7 that catalyzes the cyclization of the prenyl group that yields the pentacyclic pathway intermediate chevalone E. Chevalone E can derivatize into seven new oxidized analogs by the cytochrome P450 monooxygenases cle2 (acting at C-20) and cle4 (acting at C-11 and C-12). The chain is Polyprenyl transferase cle5 from Aspergillus versicolor.